We begin with the raw amino-acid sequence, 86 residues long: Neuropeptide-like 3 (86 aa).

Positions 1–16 are cleaved as a signal peptide; that stretch reads MFKLCVFVALLSLAAA. 2 propeptides span residues 17 to 50 and 63 to 75; these read APAPAPAPGLIAPGLVAPGIWGPTVVGSPLVAPQ and AITQVHPSPLLIK. An Isoleucine amide modification is found at Ile85.

Its subcellular location is the secreted. The sequence is that of Neuropeptide-like 3 (Nplp3) from Drosophila yakuba (Fruit fly).